Reading from the N-terminus, the 458-residue chain is MAGSPSRAAGRRLQLPLLCLFLQGATAVLFAVFVRYNHKTDAALWHRGNHSNADNEFYFRYPSFQDVHAMVFVGFGFLMVFLQRYGFSSVGFTFLLAAFALQWSTLVQGFLHSFHSGHIHVGVESMINADFCAGAVLISFGAVLGKTGPAQLLLMALLEVVLFGINEFVLLHLLGVRDAGGSMTIHTFGAYFGLVLSRVLYRPQLEKSKHRQGSVYHSDLFAMIGTIFLWIFWPSFNSALTALGAGQHRTALNTYYSLAASTLGTFALSALVGEDGRLDMVHIQNAALAGGVVVGTSSEMMLTPFGALAAGFLAGTVSTLGYKFFTPILESKFKVQDTCGVHNLHGMPGVLGALLGVLVAGLATHEAYGDGLESVFPLIAEGQRSATSQAMLQLFGLFVTLMFASVGGGLGGLLLKLPFLDSPPDSQCYEDQVHWQVPGEHEDEAQRPLRVEEADTQA.

Topologically, residues 1 to 13 are cytoplasmic; the sequence is MAGSPSRAAGRRL. A helical membrane pass occupies residues 14–34; sequence QLPLLCLFLQGATAVLFAVFV. Residues 35–61 lie on the Extracellular side of the membrane; it reads RYNHKTDAALWHRGNHSNADNEFYFRY. N49 carries an N-linked (GlcNAc...) asparagine glycan. Residues 62-82 form a helical membrane-spanning segment; sequence PSFQDVHAMVFVGFGFLMVFL. Residues 83-86 lie on the Cytoplasmic side of the membrane; sequence QRYG. The chain crosses the membrane as a helical span at residues 87 to 107; it reads FSSVGFTFLLAAFALQWSTLV. The Extracellular segment spans residues 108 to 124; it reads QGFLHSFHSGHIHVGVE. A helical transmembrane segment spans residues 125 to 145; it reads SMINADFCAGAVLISFGAVLG. At 146–149 the chain is on the cytoplasmic side; the sequence is KTGP. The chain crosses the membrane as a helical span at residues 150–170; it reads AQLLLMALLEVVLFGINEFVL. The Extracellular portion of the chain corresponds to 171-178; it reads LHLLGVRD. The helical transmembrane segment at 179–201 threads the bilayer; that stretch reads AGGSMTIHTFGAYFGLVLSRVLY. Over 202-219 the chain is Cytoplasmic; the sequence is RPQLEKSKHRQGSVYHSD. Residues 220 to 240 traverse the membrane as a helical segment; that stretch reads LFAMIGTIFLWIFWPSFNSAL. The Extracellular portion of the chain corresponds to 241-251; it reads TALGAGQHRTA. The helical transmembrane segment at 252–272 threads the bilayer; the sequence is LNTYYSLAASTLGTFALSALV. Topologically, residues 273–282 are cytoplasmic; that stretch reads GEDGRLDMVH. A helical membrane pass occupies residues 283–303; that stretch reads IQNAALAGGVVVGTSSEMMLT. Residue P304 is a topological domain, extracellular. The helical transmembrane segment at 305 to 325 threads the bilayer; that stretch reads FGALAAGFLAGTVSTLGYKFF. Residues 326 to 346 lie on the Cytoplasmic side of the membrane; the sequence is TPILESKFKVQDTCGVHNLHG. A helical membrane pass occupies residues 347 to 367; that stretch reads MPGVLGALLGVLVAGLATHEA. The Extracellular segment spans residues 368–393; sequence YGDGLESVFPLIAEGQRSATSQAMLQ. Residues 394–414 form a helical membrane-spanning segment; it reads LFGLFVTLMFASVGGGLGGLL. Residues 415 to 458 are Cytoplasmic-facing; it reads LKLPFLDSPPDSQCYEDQVHWQVPGEHEDEAQRPLRVEEADTQA. Residues 416–424 form an interaction with ANK3 region; it reads KLPFLDSPP. Residues 429 to 432 carry the Basolateral sorting signal motif; sequence YEDQ. Residues 439 to 458 form a disordered region; it reads GEHEDEAQRPLRVEEADTQA. Residues 444–458 are compositionally biased toward basic and acidic residues; it reads EAQRPLRVEEADTQA.

It belongs to the ammonium transporter (TC 2.A.49) family. Rh subfamily. As to quaternary structure, interacts (via C-terminus) with ANK2 and ANK3; required for targeting to the basolateral membrane. N-glycosylated.

Its subcellular location is the cell membrane. The protein resides in the basolateral cell membrane. The catalysed reaction is NH4(+)(in) = NH4(+)(out). The enzyme catalyses methylamine(out) = methylamine(in). It carries out the reaction CO2(out) = CO2(in). In terms of biological role, ammonium transporter involved in the maintenance of acid-base homeostasis. Transports ammonium and its related derivative methylammonium across the basolateral plasma membrane of epithelial cells likely contributing to renal transepithelial ammonia transport and ammonia metabolism. May transport either NH4(+) or NH3 ammonia species predominantly mediating an electrogenic NH4(+) transport. May act as a CO2 channel providing for renal acid secretion. This chain is Ammonium transporter Rh type B (RHBG), found in Macaca mulatta (Rhesus macaque).